The following is a 285-amino-acid chain: Bifunctional protein FolD 2 (285 aa).

NADP(+) is bound by residues 164–166 (GRS), serine 189, and valine 230.

The protein belongs to the tetrahydrofolate dehydrogenase/cyclohydrolase family. As to quaternary structure, homodimer.

The catalysed reaction is (6R)-5,10-methylene-5,6,7,8-tetrahydrofolate + NADP(+) = (6R)-5,10-methenyltetrahydrofolate + NADPH. It catalyses the reaction (6R)-5,10-methenyltetrahydrofolate + H2O = (6R)-10-formyltetrahydrofolate + H(+). It participates in one-carbon metabolism; tetrahydrofolate interconversion. Catalyzes the oxidation of 5,10-methylenetetrahydrofolate to 5,10-methenyltetrahydrofolate and then the hydrolysis of 5,10-methenyltetrahydrofolate to 10-formyltetrahydrofolate. This is Bifunctional protein FolD 2 from Geobacter metallireducens (strain ATCC 53774 / DSM 7210 / GS-15).